A 130-amino-acid polypeptide reads, in one-letter code: Small ribosomal subunit protein uS9 (130 aa).

This sequence belongs to the universal ribosomal protein uS9 family.

The chain is Small ribosomal subunit protein uS9 from Halorhodospira halophila (strain DSM 244 / SL1) (Ectothiorhodospira halophila (strain DSM 244 / SL1)).